The following is a 183-amino-acid chain: Large ribosomal subunit protein bL32m (183 aa).

A mitochondrion-targeting transit peptide spans 1–71 (MNSLIFGKQL…DFFSNNGILL (71 aa)). 4 residues coordinate Zn(2+): C104, C107, C117, and C120.

Belongs to the bacterial ribosomal protein bL32 family. Component of the mitochondrial large ribosomal subunit (mt-LSU). Mature yeast 74S mitochondrial ribosomes consist of a small (37S) and a large (54S) subunit. The 37S small subunit contains a 15S ribosomal RNA (15S mt-rRNA) and 34 different proteins. The 54S large subunit contains a 21S rRNA (21S mt-rRNA) and 46 different proteins. bL32m has a zinc binding site. Post-translationally, MRPL32 precursor is processed by the m-AAA protease (composed of YTA12/RCA1 and YTA10/AFG3), which cleaves the N-terminal transit peptide. Cleavage by the m-AAA protease takes place prior to assembly into the large subunit, an essential step for mitochondrial ribosome (mitoribosome) assembly. Proper processing by the m-AAA protease is dependent on the zinc-binding region within the tightly folded C-terminal domain of MRPL32: zinc-dependent folding halts degradation initiated from the N-terminus and triggers the release of mature MRPL32.

It is found in the mitochondrion. In terms of biological role, component of the mitochondrial ribosome (mitoribosome), a dedicated translation machinery responsible for the synthesis of mitochondrial genome-encoded proteins, including at least some of the essential transmembrane subunits of the mitochondrial respiratory chain. The mitoribosomes are attached to the mitochondrial inner membrane and translation products are cotranslationally integrated into the membrane. The polypeptide is Large ribosomal subunit protein bL32m (Saccharomyces cerevisiae (strain ATCC 204508 / S288c) (Baker's yeast)).